We begin with the raw amino-acid sequence, 397 residues long: Dual-specificity RNA methyltransferase RlmN (397 aa).

Glu120 acts as the Proton acceptor in catalysis. One can recognise a Radical SAM core domain in the interval 126–369; it reads ETDRGTLCVS…VRTPRGRDIL (244 aa). A disulfide bond links Cys133 and Cys372. [4Fe-4S] cluster contacts are provided by Cys140, Cys144, and Cys147. Residues 198–199, Ser230, 252–254, and Asn329 contribute to the S-adenosyl-L-methionine site; these read GE and SLH. Cys372 serves as the catalytic S-methylcysteine intermediate.

The protein belongs to the radical SAM superfamily. RlmN family. [4Fe-4S] cluster serves as cofactor.

It is found in the cytoplasm. It catalyses the reaction adenosine(2503) in 23S rRNA + 2 reduced [2Fe-2S]-[ferredoxin] + 2 S-adenosyl-L-methionine = 2-methyladenosine(2503) in 23S rRNA + 5'-deoxyadenosine + L-methionine + 2 oxidized [2Fe-2S]-[ferredoxin] + S-adenosyl-L-homocysteine. The catalysed reaction is adenosine(37) in tRNA + 2 reduced [2Fe-2S]-[ferredoxin] + 2 S-adenosyl-L-methionine = 2-methyladenosine(37) in tRNA + 5'-deoxyadenosine + L-methionine + 2 oxidized [2Fe-2S]-[ferredoxin] + S-adenosyl-L-homocysteine. In terms of biological role, specifically methylates position 2 of adenine 2503 in 23S rRNA and position 2 of adenine 37 in tRNAs. m2A2503 modification seems to play a crucial role in the proofreading step occurring at the peptidyl transferase center and thus would serve to optimize ribosomal fidelity. This is Dual-specificity RNA methyltransferase RlmN from Nitrobacter winogradskyi (strain ATCC 25391 / DSM 10237 / CIP 104748 / NCIMB 11846 / Nb-255).